A 298-amino-acid chain; its full sequence is MSRTLSMRRRQRLEMYYKKVPSVFTVTSNQEESTLQLVNNKPVVIEPFRSSVVPLGVYLRCLPGYACMLLANTYRNVTFHPGLIDPTYMGELKLICNNRTDAYVVVPAGRLKVTVLAFTFLSPILTGPSVLSPPQYTDDAGYDLCLDQLVMVLPLKAFTFQLALTCPIQSKNFTPVVLGRSGLAAKGLSITPCKWKGDVLRLSMFNHTSETIILPEGSRLCQVVFMHNDHLPTIKPRILAAFLFQHRLMDMPFCQSRVSFIDIQKDPCTSTSTLFQDSTGNSISDATRGSKGLGSSGI.

180–182 (RSG) serves as a coordination point for substrate.

This sequence belongs to the dUTPase family. Mg(2+) is required as a cofactor.

The catalysed reaction is dUTP + H2O = dUMP + diphosphate + H(+). In terms of biological role, involved in nucleotide metabolism: produces dUMP, the immediate precursor of thymidine nucleotides and decreases the intracellular concentration of dUTP to avoid uracil incorporation into viral DNA. This Alcelaphine herpesvirus 1 (strain C500) (AlHV-1) protein is Deoxyuridine 5'-triphosphate nucleotidohydrolase.